The following is an 88-amino-acid chain: U1-hexatoxin-Iw1c (88 aa).

An N-terminal signal peptide occupies residues 1-17; it reads LKFVVLICLVIMASTSA. Gln-18 is subject to Pyrrolidone carboxylic acid. Intrachain disulfides connect Cys-20-Cys-31, Cys-25-Cys-39, Cys-30-Cys-65, Cys-49-Cys-73, and Cys-67-Cys-80. The propeptide occupies 86 to 88; sequence RSE.

This sequence belongs to the MIT-like AcTx family. Expressed by the venom gland.

The protein resides in the secreted. The protein is U1-hexatoxin-Iw1c of Illawarra wisharti (Illawarra funnel-web spider).